A 453-amino-acid polypeptide reads, in one-letter code: Ribosomal protein uS12 methylthiotransferase RimO (453 aa).

An MTTase N-terminal domain is found at 5 to 120; the sequence is PKVGFVSLGC…VMQAVHSHLP (116 aa). 6 residues coordinate [4Fe-4S] cluster: C14, C50, C79, C151, C155, and C158. Positions 137–382 constitute a Radical SAM core domain; the sequence is LTPRHYAYLK…MEVAEEVSAN (246 aa). Positions 385 to 453 constitute a TRAM domain; that stretch reads QRKVGKTLKV…ADGHDLWGEV (69 aa).

The protein belongs to the methylthiotransferase family. RimO subfamily. The cofactor is [4Fe-4S] cluster.

The protein localises to the cytoplasm. The enzyme catalyses L-aspartate(89)-[ribosomal protein uS12]-hydrogen + (sulfur carrier)-SH + AH2 + 2 S-adenosyl-L-methionine = 3-methylsulfanyl-L-aspartate(89)-[ribosomal protein uS12]-hydrogen + (sulfur carrier)-H + 5'-deoxyadenosine + L-methionine + A + S-adenosyl-L-homocysteine + 2 H(+). Catalyzes the methylthiolation of an aspartic acid residue of ribosomal protein uS12. In Burkholderia cenocepacia (strain HI2424), this protein is Ribosomal protein uS12 methylthiotransferase RimO.